A 79-amino-acid chain; its full sequence is uncharacterized protein (79 aa).

The region spanning 3–54 (SKKNKIVAALLAFFFGGLGIHKFYLGRVGQGILYILFCWTGIPSIIAFIEFI) is the TM2 domain. Transmembrane regions (helical) follow at residues 8–28 (IVAALLAFFFGGLGIHKFYLG) and 37–57 (ILFCWTGIPSIIAFIEFIIFL).

The protein localises to the cell membrane. This is an uncharacterized protein from Bacillus subtilis (strain 168).